The sequence spans 106 residues: Small ribosomal subunit protein uS10 (106 aa).

It belongs to the universal ribosomal protein uS10 family. As to quaternary structure, part of the 30S ribosomal subunit.

Its function is as follows. Involved in the binding of tRNA to the ribosomes. This is Small ribosomal subunit protein uS10 from Pyrobaculum aerophilum (strain ATCC 51768 / DSM 7523 / JCM 9630 / CIP 104966 / NBRC 100827 / IM2).